A 411-amino-acid chain; its full sequence is Small ribosomal subunit protein bS1c (411 aa).

The transit peptide at 1-41 (MASLAQQLAGGLRCPPLSNSNLSKPFSPKHTLKPRFSPIVS) directs the protein to the chloroplast. S1 motif domains follow at residues 96-166 (GSRV…LSLR), 184-248 (DVVV…MSNR), and 261-329 (GSVV…LSTK).

It belongs to the bacterial ribosomal protein bS1 family. As to quaternary structure, component of the chloroplast small ribosomal subunit (SSU). Mature 70S chloroplast ribosomes of higher plants consist of a small (30S) and a large (50S) subunit. The 30S small subunit contains 1 molecule of ribosomal RNA (16S rRNA) and 24 different proteins. The 50S large subunit contains 3 rRNA molecules (23S, 5S and 4.5S rRNA) and 33 different proteins.

It localises to the plastid. Its subcellular location is the chloroplast. In terms of biological role, component of the chloroplast ribosome (chloro-ribosome), a dedicated translation machinery responsible for the synthesis of chloroplast genome-encoded proteins, including proteins of the transcription and translation machinery and components of the photosynthetic apparatus. Actively engaged in the initiation complex formation via a strong mRNA-binding activity. Possesses a poly(A)-binding activity which might play a role as a control element in chloroplast mRNA translation. The polypeptide is Small ribosomal subunit protein bS1c (RPS1) (Spinacia oleracea (Spinach)).